A 287-amino-acid chain; its full sequence is 4-hydroxybenzoate octaprenyltransferase (287 aa).

9 helical membrane-spanning segments follow: residues 20–40, 43–63, 94–114, 115–135, 137–157, 159–179, 210–230, 235–255, and 266–286; these read IGSL…ADGL, MHVL…GCVI, LGLF…MNTL, TIML…MKRY, HLPQ…AYAA, AGEL…WTIA, IIIG…GHSL, IYYW…RLIG, and FLNN…SVMM.

Belongs to the UbiA prenyltransferase family. It depends on Mg(2+) as a cofactor.

It is found in the cell inner membrane. It catalyses the reaction all-trans-octaprenyl diphosphate + 4-hydroxybenzoate = 4-hydroxy-3-(all-trans-octaprenyl)benzoate + diphosphate. Its pathway is cofactor biosynthesis; ubiquinone biosynthesis. Functionally, catalyzes the prenylation of para-hydroxybenzoate (PHB) with an all-trans polyprenyl group. Mediates the second step in the final reaction sequence of ubiquinone-8 (UQ-8) biosynthesis, which is the condensation of the polyisoprenoid side chain with PHB, generating the first membrane-bound Q intermediate 3-octaprenyl-4-hydroxybenzoate. This is 4-hydroxybenzoate octaprenyltransferase from Photobacterium profundum (strain SS9).